A 420-amino-acid polypeptide reads, in one-letter code: Methionine aminopeptidase 2 (420 aa).

Residues 1–48 (MSDAIAKDAVNTSSEKEPVSATPELKTSGSPDAAVSSGDKKKKKKKKK) are disordered. Histidine 172 serves as a coordination point for substrate. 3 residues coordinate a divalent metal cation: aspartate 192, aspartate 203, and histidine 272. Histidine 280 serves as a coordination point for substrate. The a divalent metal cation site is built by glutamate 305 and glutamate 401.

The protein belongs to the peptidase M24A family. Methionine aminopeptidase eukaryotic type 2 subfamily. It depends on Co(2+) as a cofactor. Zn(2+) is required as a cofactor. Requires Mn(2+) as cofactor. Fe(2+) serves as cofactor.

It is found in the cytoplasm. It catalyses the reaction Release of N-terminal amino acids, preferentially methionine, from peptides and arylamides.. In terms of biological role, cotranslationally removes the N-terminal methionine from nascent proteins. The N-terminal methionine is often cleaved when the second residue in the primary sequence is small and uncharged (Met-Ala-, Cys, Gly, Pro, Ser, Thr, or Val). The polypeptide is Methionine aminopeptidase 2 (Lachancea thermotolerans (strain ATCC 56472 / CBS 6340 / NRRL Y-8284) (Yeast)).